The following is a 725-amino-acid chain: G-quartet DNA-binding protein TGP1 (725 aa).

The Nuclear localization signal signature appears at 241-258 (KKALTDVLQIHEKKERVH). Disordered stretches follow at residues 252–284 (EKKE…LQET) and 468–614 (EIHK…GKRG). Over residues 256 to 277 (RVHKQQNKNKNPRNAHKNHNRQ) the composition is skewed to basic residues. Basic and acidic residues predominate over residues 468–478 (EIHKIDRERKR). Over residues 517–544 (NKYKNTSVQNNNNNKNQQRSQSQNQRPP) the composition is skewed to low complexity. Over residues 545–564 (RNYDNRQGGENRNNRQRNEN) the composition is skewed to basic and acidic residues. Residues 565–593 (NRNNFNGNGHRVNNQNNQRNRNSSYPRNN) show a composition bias toward low complexity.

In terms of processing, the N-terminus is blocked.

The protein localises to the nucleus. Binds specifically to parallel G4-DNA, a four-stranded structure stabilized by tetrads of hydrogen-bonded guanines. The chain is G-quartet DNA-binding protein TGP1 (TGP1) from Tetrahymena thermophila.